Consider the following 185-residue polypeptide: Elongation factor P (185 aa).

Belongs to the elongation factor P family.

It is found in the cytoplasm. It functions in the pathway protein biosynthesis; polypeptide chain elongation. Its function is as follows. Involved in peptide bond synthesis. Stimulates efficient translation and peptide-bond synthesis on native or reconstituted 70S ribosomes in vitro. Probably functions indirectly by altering the affinity of the ribosome for aminoacyl-tRNA, thus increasing their reactivity as acceptors for peptidyl transferase. The chain is Elongation factor P from Aromatoleum aromaticum (strain DSM 19018 / LMG 30748 / EbN1) (Azoarcus sp. (strain EbN1)).